Here is a 1499-residue protein sequence, read N- to C-terminus: MKPLAIPANHGVMGQQEKHSLPADFTKLHLTDSLHPQVTHVSSSHSGCSITSDSGSSSLSDIYQATESEAGDMDLSGLPETAVDSEDDDDEEDIERASDPLMSRDIVRDCLEKDPIDRTDDDIEQLLEFMHQLPAFANMTMSVRRELCAVMVFAVVERAGTIVLNDGEELDSWSVILNGSVEVTYPDGKAEILCMGNSFGVSPTMDKEYMKGVMRTKVDDCQFVCIAQQDYCRILNQVEKNMQKVEEEGEIVMVKEHRELDRTGTRKGHIVIKGTSERLTMHLVEEHSVVDPTFIEDFLLTYRTFLSSPMEVGKKLLEWFNDPSLRDKVTRVVLLWVNNHFNDFEGDPAMTRFLEEFENNLEREKMGGHLRLLNIACAAKAKRRLMTLTKPSREAPLPFILLGGSEKGFGIFVDSVDSGSKATEAGLKRGDQILEVNGQNFENIQLSKAMEILRNNTHLSITVKTNLFVFKELLTRLSEEKRNGAPHLPKIGDIKKASRYSIPDLAVDVEQVIGLEKVNKKSKANTVGGRNKLKKILDKTRISILPQKPYNDIGIGQSQDDSIVGLRQTKHIPTALPVSGTLSSSNPDLLQSHHRILDFSATPDLPDQVLRVFKADQQSRYIMISKDTTAKEVVIQAIREFAVTATPDQYSLCEVSVTPEGVIKQRRLPDQLSKLADRIQLSGRYYLKNNMETETLCSDEDAQELLRESQISLLQLSTVEVATQLSMRNFELFRNIEPTEYIDDLFKLRSKTSCANLKRFEEVINQETFWVASEILRETNQLKRMKIIKHFIKIALHCRECKNFNSMFAIISGLNLAPVARLRTTWEKLPNKYEKLFQDLQDLFDPSRNMAKYRNVLNSQNLQPPIIPLFPVIKKDLTFLHEGNDSKVDGLVNFEKLRMIAKEIRHVGRMASVNMDPALMFRTRKKKWRSLGSLSQGSTNATVLDVAQTGGHKKRVRRSSFLNAKKLYEDAQMARKVKQYLSNLELEMDEESLQTLSLQCEPATNTLPKNPGDKKPVKSETSPVAPRAGSQQKAQSLPQPQQQPPPAHKINQGLQVPAVSLYPSRKKVPVKDLPPFGINSPQALKKILSLSEEGSLERHKKQAEDTISNASSQLSSPPTSPQSSPRKGYTLAPSGTVDNFSDSGHSEISSRSSIVSNSSFDSVPVSLHDERRQRHSVSIVETNLGMGRMERRTMIEPDQYSLGSYAPMSEGRGLYATATVISSPSTEELSQDQGDRASLDAADSGRGSWTSCSSGSHDNIQTIQHQRSWETLPFGHTHFDYSGDPAGLWASSSHMDQIMFSDHSTKYNRQNQSRESLEQAQSRASWASSTGYWGEDSEGDTGTIKRRGGKDVSIEAESSSLTSVTTEETKPVPMPAHIAVASSTTKGLIARKEGRYREPPPTPPGYIGIPITDFPEGHSHPARKPPDYNVALQRSRMVARSSDTAGPSSVQQPHGHPTSSRPVNKPQWHKPNESDPRLAPYQSQGFSTEEDEDEQVSAV.

Disordered regions lie at residues 40-59 (HVSS…SSSL) and 68-101 (SEAG…SDPL). Acidic residues predominate over residues 83 to 94 (VDSEDDDDEEDI). 135-254 (AFANMTMSVR…VEEEGEIVMV (120 aa)) lines the a nucleoside 3',5'-cyclic phosphate pocket. One can recognise an N-terminal Ras-GEF domain in the interval 267 to 380 (KGHIVIKGTS…RLLNIACAAK (114 aa)). A PDZ domain is found at 385-470 (LMTLTKPSRE…ITVKTNLFVF (86 aa)). S501 is modified (phosphoserine). In terms of domain architecture, Ras-associating spans 606–692 (PDQVLRVFKA…GRYYLKNNME (87 aa)). T644 bears the Phosphothreonine; by PLK2 mark. In terms of domain architecture, Ras-GEF spans 717–944 (STVEVATQLS…SQGSTNATVL (228 aa)). The residue at position 806 (S806) is a Phosphoserine; by PLK2. The residue at position 930 (S930) is a Phosphoserine. S933 is subject to Phosphoserine; by PLK2. A disordered region spans residues 1002-1050 (PATNTLPKNPGDKKPVKSETSPVAPRAGSQQKAQSLPQPQQQPPPAHKI). The residue at position 1022 (S1022) is a Phosphoserine. Residues 1031-1040 (QQKAQSLPQP) show a composition bias toward low complexity. A phosphoserine mark is found at S1080, S1089, S1095, S1116, S1120, and S1159. A disordered region spans residues 1095-1160 (SLERHKKQAE…RSSIVSNSSF (66 aa)). Low complexity-rich tracts occupy residues 1111–1125 (SSQL…QSSP) and 1141–1160 (SDSG…NSSF). Phosphoserine; by PLK2 is present on S1176. Disordered stretches follow at residues 1224 to 1256 (PSTE…SSGS) and 1305 to 1499 (TKYN…VSAV). 2 stretches are compositionally biased toward polar residues: residues 1247–1256 (GSWTSCSSGS) and 1307–1331 (YNRQ…SSTG). Over residues 1355 to 1366 (EAESSSLTSVTT) the composition is skewed to low complexity. A compositionally biased stretch (polar residues) spans 1441–1462 (SSDTAGPSSVQQPHGHPTSSRP). Acidic residues predominate over residues 1488–1499 (TEEDEDEQVSAV).

Belongs to the RAPGEF2 family. Interacts with CDH1, CTNNB1 and TJP1. Interacts (via C-terminal domain) with MAGI2 (via PDZ and WW domains); the interaction occurs before or after NGF stimulation. Interacts with KIDINS220 and NTRK1; the interactions occur after NGF stimulation. Found in a complex, at least composed of KIDINS220, MAGI2, NTRK1 and RAPGEF2; the complex is mainly formed at late endosomes in a neuronal growth factor (NGF)-dependent manner. Interacts (via C-terminal domain) with NEDD4 (via WW domains); this interaction leads to ubiquitination and degradation via the proteasome pathway in a cAMP-independent manner. Interacts with MAGI1 isoform 3 (via PDZ domain). Interacts with ADRB1 (via C-terminal PDZ motif); the interaction is direct. Interacts (via Ras-associating domain) with RAP1A (via GTP-bound active form). Interacts weakly with HRAS (via GDP- and GTP-bound forms). Interacts (via C-terminal domain) with MAGI2 (via PDZ and WW domains). Post-translationally, ubiquitinated by NEDD4, leading to proteasomal degradation. In terms of processing, phosphorylation by PLK2 promotes its activity. Expressed in primary neuronal and endocrine cells (at protein level). Highest expression levels in brain. Lower expression levels in heart, kidney, lung, placenta and blood leukocytes.

It localises to the cytoplasm. The protein localises to the perinuclear region. The protein resides in the cell membrane. It is found in the late endosome. Its subcellular location is the cell junction. In terms of biological role, functions as a guanine nucleotide exchange factor (GEF), which activates Rap and Ras family of small GTPases by exchanging bound GDP for free GTP in a cAMP-dependent manner. Serves as a link between cell surface receptors and Rap/Ras GTPases in intracellular signaling cascades. Also acts as an effector for Rap1 by direct association with Rap1-GTP thereby leading to the amplification of Rap1-mediated signaling. Shows weak activity on HRAS. It is controversial whether RAPGEF2 binds cAMP and cGMP or not. Its binding to ligand-activated beta-1 adrenergic receptor ADRB1 leads to the Ras activation through the G(s)-alpha signaling pathway. Involved in the cAMP-induced Ras and Erk1/2 signaling pathway that leads to sustained inhibition of long term melanogenesis by reducing dendrite extension and melanin synthesis. Also provides inhibitory signals for cell proliferation of melanoma cells and promotes their apoptosis in a cAMP-independent nanner. Regulates cAMP-induced neuritogenesis by mediating the Rap1/B-Raf/ERK signaling through a pathway that is independent on both PKA and RAPGEF3/RAPGEF4. Involved in neuron migration and in the formation of the major forebrain fiber connections forming the corpus callosum, the anterior commissure and the hippocampal commissure during brain development. Involved in neuronal growth factor (NGF)-induced sustained activation of Rap1 at late endosomes and in brain-derived neurotrophic factor (BDNF)-induced axon outgrowth of hippocampal neurons. Plays a role in the regulation of embryonic blood vessel formation and in the establishment of basal junction integrity and endothelial barrier function. May be involved in the regulation of the vascular endothelial growth factor receptor KDR and cadherin CDH5 expression at allantois endothelial cell-cell junctions. The polypeptide is Rap guanine nucleotide exchange factor 2 (RAPGEF2) (Homo sapiens (Human)).